The following is a 212-amino-acid chain: Pyridoxine/pyridoxamine 5'-phosphate oxidase (212 aa).

Substrate-binding positions include 8 to 11 (RREY) and Lys66. FMN contacts are provided by residues 61-66 (RIVLLK), 76-77 (FT), Arg82, Lys83, and Gln105. The substrate site is built by Tyr123, Arg127, and Ser131. Residues 140 to 141 (QS) and Trp185 each bind FMN. Residue 191–193 (RLH) coordinates substrate. An FMN-binding site is contributed by Arg195.

It belongs to the pyridoxamine 5'-phosphate oxidase family. In terms of assembly, homodimer. FMN is required as a cofactor.

It carries out the reaction pyridoxamine 5'-phosphate + O2 + H2O = pyridoxal 5'-phosphate + H2O2 + NH4(+). The catalysed reaction is pyridoxine 5'-phosphate + O2 = pyridoxal 5'-phosphate + H2O2. It participates in cofactor metabolism; pyridoxal 5'-phosphate salvage; pyridoxal 5'-phosphate from pyridoxamine 5'-phosphate: step 1/1. The protein operates within cofactor metabolism; pyridoxal 5'-phosphate salvage; pyridoxal 5'-phosphate from pyridoxine 5'-phosphate: step 1/1. Catalyzes the oxidation of either pyridoxine 5'-phosphate (PNP) or pyridoxamine 5'-phosphate (PMP) into pyridoxal 5'-phosphate (PLP). The chain is Pyridoxine/pyridoxamine 5'-phosphate oxidase from Shewanella sp. (strain ANA-3).